The primary structure comprises 399 residues: Putative glutamate--cysteine ligase 2 (399 aa).

Residues 377–399 (PAVGSSHGRTDPSRNGGPSHAGA) are disordered.

Belongs to the glutamate--cysteine ligase type 2 family. YbdK subfamily.

It catalyses the reaction L-cysteine + L-glutamate + ATP = gamma-L-glutamyl-L-cysteine + ADP + phosphate + H(+). ATP-dependent carboxylate-amine ligase which exhibits weak glutamate--cysteine ligase activity. The sequence is that of Putative glutamate--cysteine ligase 2 from Thermobifida fusca (strain YX).